The sequence spans 147 residues: Ribonuclease H (147 aa).

Residues Met1–Thr142 form the RNase H type-1 domain. Asp10, Glu48, Asp70, and Asp134 together coordinate Mg(2+).

This sequence belongs to the RNase H family. Monomer. The cofactor is Mg(2+).

It localises to the cytoplasm. It catalyses the reaction Endonucleolytic cleavage to 5'-phosphomonoester.. Endonuclease that specifically degrades the RNA of RNA-DNA hybrids. This chain is Ribonuclease H, found in Nitrosococcus oceani (strain ATCC 19707 / BCRC 17464 / JCM 30415 / NCIMB 11848 / C-107).